Consider the following 420-residue polypeptide: Ribulose bisphosphate carboxylase large chain (420 aa).

Substrate contacts are provided by N103 and T153. K155 serves as the catalytic Proton acceptor. A substrate-binding site is contributed by K157. Residues K181, D183, and E184 each contribute to the Mg(2+) site. Residue K181 is modified to N6-carboxylysine. The Proton acceptor role is filled by H274. R275, H307, and S359 together coordinate substrate.

The protein belongs to the RuBisCO large chain family. Type I subfamily. Heterohexadecamer of 8 large chains and 8 small chains; disulfide-linked. The disulfide link is formed within the large subunit homodimers. Requires Mg(2+) as cofactor. The disulfide bond which can form in the large chain dimeric partners within the hexadecamer appears to be associated with oxidative stress and protein turnover.

It is found in the plastid. The protein localises to the chloroplast. It catalyses the reaction 2 (2R)-3-phosphoglycerate + 2 H(+) = D-ribulose 1,5-bisphosphate + CO2 + H2O. The enzyme catalyses D-ribulose 1,5-bisphosphate + O2 = 2-phosphoglycolate + (2R)-3-phosphoglycerate + 2 H(+). In terms of biological role, ruBisCO catalyzes two reactions: the carboxylation of D-ribulose 1,5-bisphosphate, the primary event in carbon dioxide fixation, as well as the oxidative fragmentation of the pentose substrate in the photorespiration process. Both reactions occur simultaneously and in competition at the same active site. This Anemia mexicana (Mexican fern) protein is Ribulose bisphosphate carboxylase large chain.